Reading from the N-terminus, the 273-residue chain is Ribosomal RNA small subunit methyltransferase I (273 aa).

The protein belongs to the methyltransferase superfamily. RsmI family.

The protein localises to the cytoplasm. It catalyses the reaction cytidine(1402) in 16S rRNA + S-adenosyl-L-methionine = 2'-O-methylcytidine(1402) in 16S rRNA + S-adenosyl-L-homocysteine + H(+). Its function is as follows. Catalyzes the 2'-O-methylation of the ribose of cytidine 1402 (C1402) in 16S rRNA. In Xylella fastidiosa (strain 9a5c), this protein is Ribosomal RNA small subunit methyltransferase I.